The chain runs to 1284 residues: Neurexin-4 (1284 aa).

The signal sequence occupies residues 1 to 35 (MRPPRSNTKAAFSSLQFGLLCLLLLVNNGIKSVQA). The Extracellular segment spans residues 36–1217 (DAFTDYFSDY…LRKAYNEVDS (1182 aa)). In terms of domain architecture, F5/8 type C spans 47-185 (CNQPLMERAV…ISMRVELYGC (139 aa)). Cys-47 and Cys-185 form a disulfide bridge. Asn-195, Asn-329, Asn-340, and Asn-398 each carry an N-linked (GlcNAc...) asparagine glycan. In terms of domain architecture, Laminin G-like 1 spans 220–369 (FKTAFANGVM…FTRVNTIYAC (150 aa)). A disulfide bridge links Cys-333 with Cys-369. The Laminin G-like 2 domain maps to 403 to 540 (FRTYEETGVM…CGDDVVVDAC (138 aa)). 4 cysteine pairs are disulfide-bonded: Cys-507–Cys-540, Cys-546–Cys-557, Cys-551–Cys-566, and Cys-568–Cys-578. An EGF-like 1 domain is found at 542–579 (MIDRCNPNPCQHKGLCHQNSREFFCDCGHTGYAGAVCH). Asn-668 carries an N-linked (GlcNAc...) asparagine glycan. The 139-residue stretch at 824–962 (FRTTQENSVI…RGLYGISTGC (139 aa)) folds into the Laminin G-like 3 domain. 4 cysteine pairs are disulfide-bonded: Cys-934–Cys-962, Cys-966–Cys-977, Cys-971–Cys-986, and Cys-988–Cys-998. The 38-residue stretch at 962–999 (CVGRCESNPCLNNGTCIERYDGYSCDCRWSAFKGPICA) folds into the EGF-like 2 domain. The N-linked (GlcNAc...) asparagine glycan is linked to Asn-974. The 152-residue stretch at 1032–1183 (FTTTIPKGFL…LGTQLTEDFC (152 aa)) folds into the Laminin G-like 4 domain. N-linked (GlcNAc...) asparagine glycans are attached at residues Asn-1047 and Asn-1137. A disulfide bridge links Cys-1147 with Cys-1183. Residues 1218 to 1238 (VLLACLLVILFLLLILMFFLI) form a helical membrane-spanning segment. At 1239 to 1284 (GRYLHRHKGDYLTHEDQGADGADDPDDAVLHSTTGHQVRKRTEIFI) the chain is on the cytoplasmic side.

It belongs to the neurexin family. In terms of assembly, forms a complex with Nrg and Cont. Forms a complex composed of septa junction proteins Nrx-IV/Nrx, Tsf2/MTf, Cont and Nrg during late embryogenesis. The C-terminal region interacts with coracle. Interacts with Patj in cis form. In terms of tissue distribution, found in septate junctions of epithelial and glial cells.

The protein localises to the cell membrane. It is found in the cell junction. Its subcellular location is the septate junction. Seems to play a role in the formation and function of septate junctions. Septate junctions, which are the equivalent of vertebrates tight junctions, are characterized by regular arrays of transverse structures that span the intermembrane space and form a physical barrier to diffusion. Required for the blood-brain barrier formation. This is Neurexin-4 (Nrx-IV) from Drosophila melanogaster (Fruit fly).